The following is a 185-amino-acid chain: Large ribosomal subunit protein uL13 (185 aa).

This sequence belongs to the universal ribosomal protein uL13 family. Part of the 50S ribosomal subunit.

Functionally, this protein is one of the early assembly proteins of the 50S ribosomal subunit, although it is not seen to bind rRNA by itself. It is important during the early stages of 50S assembly. The polypeptide is Large ribosomal subunit protein uL13 (Pyrobaculum islandicum (strain DSM 4184 / JCM 9189 / GEO3)).